The primary structure comprises 399 residues: Argininosuccinate synthase (399 aa).

Residue 8–16 (AYSGGLDTS) participates in ATP binding. An L-citrulline-binding site is contributed by Tyr87. Gly117 serves as a coordination point for ATP. L-aspartate contacts are provided by Thr119, Asn123, and Asp124. Asn123 is an L-citrulline binding site. Positions 127, 175, 259, and 271 each coordinate L-citrulline.

This sequence belongs to the argininosuccinate synthase family. Type 1 subfamily. In terms of assembly, homotetramer.

It localises to the cytoplasm. It catalyses the reaction L-citrulline + L-aspartate + ATP = 2-(N(omega)-L-arginino)succinate + AMP + diphosphate + H(+). It participates in amino-acid biosynthesis; L-arginine biosynthesis; L-arginine from L-ornithine and carbamoyl phosphate: step 2/3. The chain is Argininosuccinate synthase from Corynebacterium diphtheriae (strain ATCC 700971 / NCTC 13129 / Biotype gravis).